A 70-amino-acid polypeptide reads, in one-letter code: Gas vesicle protein A (70 aa).

Belongs to the gas vesicle GvpA family. As to quaternary structure, the gas vesicle shell is 2 nm thick and consists of a single layer of this protein. It forms helical ribs nearly perpendicular to the long axis of the vesicle.

The protein resides in the gas vesicle shell. In terms of biological role, gas vesicles are hollow, gas filled proteinaceous nanostructures found in some microorganisms. During planktonic growth they allow positioning of the organism at a favorable depth for light or nutrient acquisition. GvpA forms the protein shell. The polypeptide is Gas vesicle protein A (Bradyrhizobium sp. (strain ORS 278)).